Reading from the N-terminus, the 38-residue chain is Anthranilate phosphoribosyltransferase (38 aa).

Belongs to the anthranilate phosphoribosyltransferase family. In terms of assembly, homodimer.

The enzyme catalyses N-(5-phospho-beta-D-ribosyl)anthranilate + diphosphate = 5-phospho-alpha-D-ribose 1-diphosphate + anthranilate. It participates in amino-acid biosynthesis; L-tryptophan biosynthesis; L-tryptophan from chorismate: step 2/5. In terms of biological role, catalyzes the transfer of the phosphoribosyl group of 5-phosphorylribose-1-pyrophosphate (PRPP) to anthranilate to yield N-(5'-phosphoribosyl)-anthranilate (PRA). The polypeptide is Anthranilate phosphoribosyltransferase (trpD) (Serratia marcescens).